A 170-amino-acid chain; its full sequence is Dual-action ribosomal maturation protein DarP (170 aa).

Belongs to the DarP family.

It localises to the cytoplasm. In terms of biological role, member of a network of 50S ribosomal subunit biogenesis factors which assembles along the 30S-50S interface, preventing incorrect 23S rRNA structures from forming. Promotes peptidyl transferase center (PTC) maturation. This is Dual-action ribosomal maturation protein DarP from Neisseria meningitidis serogroup A / serotype 4A (strain DSM 15465 / Z2491).